Reading from the N-terminus, the 676-residue chain is Palmitoyl-CoA ligase FUM16 (676 aa).

Residue 245-256 (IMYTSGSTGLPN) participates in AMP binding. The AMP-binding stretch occupies residues 552–655 (KLESIYRTSQ…SGLVTPTMKL (104 aa)).

The protein belongs to the ATP-dependent AMP-binding enzyme family.

Its subcellular location is the endoplasmic reticulum. Its pathway is mycotoxin biosynthesis. Functionally, palmitoyl-CoA ligase; part of the gene cluster that mediates the biosynthesis of fumonisins B1 (FB1), B2 (FB2), B3 (FB3), and B4 (FB4), which are carcinogenic mycotoxins. Plays a role in the synthesis of ceramide and is involved in self-protection from fumonisin B1 toxicity. The biosynthesis starts with the FUM1-catalyzed carbon chain assembly from one molecule of acetyl-CoA, eight molecules of malonyl-CoA, and two molecules of methionine (in S-adenosyl form). The C18 polyketide chain is released from the enzyme by a nucleophilic attack of a carbanion, which is derived from R-carbon of alanine by decarboxylation, on the carbonyl carbon of polyketide acyl chain. This step is catalyzed by the pyridoxal 5'-phosphate-dependent aminoacyl transferase FUM8. The resultant 3-keto intermediate is then stereospecifically reduced to a 3-hydroxyl product by reductase FUM13. Subsequent oxidations at C-10 by the cytochrome P450 monooxygenase FUM2, C-14 and C-15 by FUM6, FUM12 or FUM15, tricarballylic esterification of the hydroxyl groups on C-14 and C-15 by acyltransferase FUM14, and C-5 hydroxylation by 2-keto-glutarate-dependent dioxygenase FUM3 furnish the biosynthesis of fumonisins. The tricarballylic moieties are most likely derived from the citric acid cycle, and their addition to the carbon backbone may involve FUM7, FUM10, FUM11 and FUM14. The protein is Palmitoyl-CoA ligase FUM16 of Gibberella moniliformis (strain M3125 / FGSC 7600) (Maize ear and stalk rot fungus).